The following is a 40-amino-acid chain: Snaclec tokaracetin subunit alpha (40 aa).

The region spanning 1-40 is the C-type lectin domain; the sequence is DCPSGWSSFKQYCYKPFKQLKTWEDAERFCLEQVKGAHLV. Cys2 and Cys13 are joined by a disulfide.

It belongs to the snaclec family. In terms of assembly, heterodimer of subunits alpha and beta; disulfide-linked. Expressed by the venom gland.

It is found in the secreted. Platelet antagonist that specifically and reversibly binds to a site on platelet glycoprotein Ibalpha (GP1BA) close to or identical with the site for vWF binding. It inhibits the binding of vWF to platelets and vWF-dependent shear-induced platelet aggregation. The sequence is that of Snaclec tokaracetin subunit alpha from Protobothrops tokarensis (Tokara habu).